The chain runs to 417 residues: NADH-quinone oxidoreductase subunit D (417 aa).

It belongs to the complex I 49 kDa subunit family. As to quaternary structure, NDH-1 is composed of 14 different subunits. Subunits NuoB, C, D, E, F, and G constitute the peripheral sector of the complex.

The protein resides in the cell inner membrane. It catalyses the reaction a quinone + NADH + 5 H(+)(in) = a quinol + NAD(+) + 4 H(+)(out). NDH-1 shuttles electrons from NADH, via FMN and iron-sulfur (Fe-S) centers, to quinones in the respiratory chain. The immediate electron acceptor for the enzyme in this species is believed to be ubiquinone. Couples the redox reaction to proton translocation (for every two electrons transferred, four hydrogen ions are translocated across the cytoplasmic membrane), and thus conserves the redox energy in a proton gradient. This is NADH-quinone oxidoreductase subunit D from Burkholderia cenocepacia (strain HI2424).